The following is a 23-amino-acid chain: Clavanin-B (23 aa).

Phenylalanine amide is present on Phe-23.

The protein resides in the secreted. In terms of biological role, has antimicrobial activity. This chain is Clavanin-B, found in Styela clava (Sea squirt).